Reading from the N-terminus, the 1487-residue chain is Murinoglobulin-1 (1487 aa).

The N-terminal stretch at 1–24 (MKKNREAQLCLFSALLAFLPFASL) is a signal peptide. A disulfide bridge links cysteine 48 with cysteine 86. N-linked (GlcNAc...) asparagine glycosylation is found at asparagine 55 and asparagine 247. Intrachain disulfides connect cysteine 251–cysteine 283 and cysteine 269–cysteine 295. Residues asparagine 301, asparagine 321, asparagine 393, and asparagine 508 are each glycosylated (N-linked (GlcNAc...) asparagine). 3 cysteine pairs are disulfide-bonded: cysteine 468/cysteine 563, cysteine 595/cysteine 784, and cysteine 643/cysteine 689. Residues 686 to 745 (PTYCYEMNMVVLSAPAVESELSPRGGEFEMMPLGVNKSPLPKEPPRKDPPPKDPVIETIR) form a bait region region. N-linked (GlcNAc...) asparagine glycans are attached at residues asparagine 760, asparagine 787, and asparagine 882. Disulfide bonds link cysteine 860–cysteine 896, cysteine 934–cysteine 1334, cysteine 1092–cysteine 1140, and cysteine 1365–cysteine 1480. The isoglutamyl cysteine thioester (Cys-Gln) cross-link spans 985–988 (CGEQ). Asparagine 1004 carries N-linked (GlcNAc...) asparagine glycosylation. Residues asparagine 1153, asparagine 1324, and asparagine 1437 are each glycosylated (N-linked (GlcNAc...) asparagine).

The protein belongs to the protease inhibitor I39 (alpha-2-macroglobulin) family. In terms of assembly, monomer. In terms of tissue distribution, plasma.

It is found in the secreted. Its function is as follows. A proteinase activates the inhibitor by specific proteolysis in the bait region, which, by an unknown mechanism leads to reaction at the cysteinyl-glutamyl internal thiol ester site and to a conformational change, whereby the proteinase is trapped and/or covalently bound to the inhibitor. While in the tetrameric proteinase inhibitors steric inhibition is sufficiently strong, monomeric forms need a covalent linkage between the activated glutamyl residue of the original thiol ester and a terminal amino group of a lysine or another nucleophilic group on the proteinase, for inhibition to be effective. The protein is Murinoglobulin-1 of Rattus norvegicus (Rat).